Consider the following 387-residue polypeptide: Succinate--CoA ligase [ADP-forming] subunit beta (387 aa).

One can recognise an ATP-grasp domain in the interval 9-244; that stretch reads KQLFAEYGIP…KTQEDETEVL (236 aa). ATP contacts are provided by residues lysine 46, 53–55, glycine 102, and glutamate 107; that span reads GRG. Residues asparagine 199 and aspartate 213 each contribute to the Mg(2+) site. Substrate-binding positions include asparagine 264 and 321–323; that span reads GIV.

Belongs to the succinate/malate CoA ligase beta subunit family. As to quaternary structure, heterotetramer of two alpha and two beta subunits. It depends on Mg(2+) as a cofactor.

It carries out the reaction succinate + ATP + CoA = succinyl-CoA + ADP + phosphate. It catalyses the reaction GTP + succinate + CoA = succinyl-CoA + GDP + phosphate. It participates in carbohydrate metabolism; tricarboxylic acid cycle; succinate from succinyl-CoA (ligase route): step 1/1. Functionally, succinyl-CoA synthetase functions in the citric acid cycle (TCA), coupling the hydrolysis of succinyl-CoA to the synthesis of either ATP or GTP and thus represents the only step of substrate-level phosphorylation in the TCA. The beta subunit provides nucleotide specificity of the enzyme and binds the substrate succinate, while the binding sites for coenzyme A and phosphate are found in the alpha subunit. In Xylella fastidiosa (strain M23), this protein is Succinate--CoA ligase [ADP-forming] subunit beta.